The following is a 226-amino-acid chain: MYAVKLNKDTLLPREKLVQYGVEQLSHQELLAILLRTGNKEKHVMELASHILHCLESLADFDKLSLQELQQLPGIGKVKAIELKAMVELCHRIQKAKSSHSIQILSSYQVAKRMMHELGDKKQEHLIAIYLDTQNRIIEEKTIFIGSVRRSIAEPREILHFACRNMATSLIVVHNHPSGLTNPSENDVAFTKKIKRSCDHLGINCLDHIIVGKKQYYSFREKSDIF.

The MPN domain maps to 103–225 (QILSSYQVAK…YYSFREKSDI (123 aa)). Residues His174, His176, and Asp187 each coordinate Zn(2+). The JAMM motif motif lies at 174-187 (HNHPSGLTNPSEND).

The protein belongs to the UPF0758 family.

In Streptococcus uberis (strain ATCC BAA-854 / 0140J), this protein is UPF0758 protein SUB0843.